A 347-amino-acid polypeptide reads, in one-letter code: uncharacterized protein (347 aa).

Mn(2+)-binding residues include aspartate 207, aspartate 218, histidine 279, glutamate 312, and glutamate 326.

This sequence belongs to the peptidase M24B family. Requires Mn(2+) as cofactor.

This is an uncharacterized protein from Methanocaldococcus jannaschii (strain ATCC 43067 / DSM 2661 / JAL-1 / JCM 10045 / NBRC 100440) (Methanococcus jannaschii).